A 315-amino-acid polypeptide reads, in one-letter code: MKHLLTAADLSRDDATAILDNADRFREALVGREVKKLPTLRGRTIITMFYENSTRTRVSFEVAGKWMSADVINVSASGSSVAKGESLRDTALTLRAAGADALIIRHPASGAPQQLAAWTLDEHGGPSVINAGDGTHEHPTQALLDALTIRQRLGSVEGKRVVIVGDVLHSRVARSNVALLHTLGAEVVLVAPPTLLPVGVTEWPVTVSHELDAELPLADAVLMLRVQAERMNGGFFPSSREYSVRYGLSEKRQSTLADHAVVLHPGPMLRGMEIAYSVADSSQSAVLQQVSNGVHVRMAVLFHLLVGSEEEAISA.

Carbamoyl phosphate is bound by residues arginine 55 and threonine 56. Residue lysine 83 coordinates L-aspartate. Residues arginine 105, histidine 138, and glutamine 141 each contribute to the carbamoyl phosphate site. L-aspartate-binding residues include arginine 171 and arginine 225. Positions 266 and 267 each coordinate carbamoyl phosphate.

This sequence belongs to the aspartate/ornithine carbamoyltransferase superfamily. ATCase family. In terms of assembly, heterododecamer (2C3:3R2) of six catalytic PyrB chains organized as two trimers (C3), and six regulatory PyrI chains organized as three dimers (R2).

It catalyses the reaction carbamoyl phosphate + L-aspartate = N-carbamoyl-L-aspartate + phosphate + H(+). It participates in pyrimidine metabolism; UMP biosynthesis via de novo pathway; (S)-dihydroorotate from bicarbonate: step 2/3. Catalyzes the condensation of carbamoyl phosphate and aspartate to form carbamoyl aspartate and inorganic phosphate, the committed step in the de novo pyrimidine nucleotide biosynthesis pathway. This is Aspartate carbamoyltransferase catalytic subunit from Mycolicibacterium gilvum (strain PYR-GCK) (Mycobacterium gilvum (strain PYR-GCK)).